The chain runs to 372 residues: Lipoyl synthase, mitochondrial (372 aa).

Residues cysteine 103, cysteine 108, cysteine 114, cysteine 134, cysteine 138, cysteine 141, and serine 349 each contribute to the [4Fe-4S] cluster site. The 220-residue stretch at 119 to 338 (EHGTQTATIM…EERGNQLGFL (220 aa)) folds into the Radical SAM core domain.

Belongs to the radical SAM superfamily. Lipoyl synthase family. Requires [4Fe-4S] cluster as cofactor.

The protein localises to the mitochondrion. It catalyses the reaction [[Fe-S] cluster scaffold protein carrying a second [4Fe-4S](2+) cluster] + N(6)-octanoyl-L-lysyl-[protein] + 2 oxidized [2Fe-2S]-[ferredoxin] + 2 S-adenosyl-L-methionine + 4 H(+) = [[Fe-S] cluster scaffold protein] + N(6)-[(R)-dihydrolipoyl]-L-lysyl-[protein] + 4 Fe(3+) + 2 hydrogen sulfide + 2 5'-deoxyadenosine + 2 L-methionine + 2 reduced [2Fe-2S]-[ferredoxin]. It functions in the pathway protein modification; protein lipoylation via endogenous pathway; protein N(6)-(lipoyl)lysine from octanoyl-[acyl-carrier-protein]: step 2/2. Functionally, catalyzes the radical-mediated insertion of two sulfur atoms into the C-6 and C-8 positions of the octanoyl moiety bound to the lipoyl domains of lipoate-dependent enzymes, thereby converting the octanoylated domains into lipoylated derivatives. The polypeptide is Lipoyl synthase, mitochondrial (Drosophila willistoni (Fruit fly)).